Reading from the N-terminus, the 81-residue chain is Putative membrane protein insertion efficiency factor (81 aa).

The protein belongs to the UPF0161 family.

The protein localises to the cell membrane. Could be involved in insertion of integral membrane proteins into the membrane. The chain is Putative membrane protein insertion efficiency factor from Geobacillus kaustophilus (strain HTA426).